A 368-amino-acid polypeptide reads, in one-letter code: tRNA-specific 2-thiouridylase MnmA (368 aa).

Residues 14-21 (AMSGGVDS) and Leu-40 contribute to the ATP site. Cys-108 (nucleophile) is an active-site residue. Residues Cys-108 and Cys-204 are joined by a disulfide bond. Gly-132 provides a ligand contact to ATP. The interaction with tRNA stretch occupies residues 154 to 156 (KDQ). The active-site Cysteine persulfide intermediate is Cys-204.

The protein belongs to the MnmA/TRMU family.

It is found in the cytoplasm. The catalysed reaction is S-sulfanyl-L-cysteinyl-[protein] + uridine(34) in tRNA + AH2 + ATP = 2-thiouridine(34) in tRNA + L-cysteinyl-[protein] + A + AMP + diphosphate + H(+). Its function is as follows. Catalyzes the 2-thiolation of uridine at the wobble position (U34) of tRNA, leading to the formation of s(2)U34. The sequence is that of tRNA-specific 2-thiouridylase MnmA from Rickettsia canadensis (strain McKiel).